The following is a 101-amino-acid chain: Small ribosomal subunit protein uS14 (101 aa).

It belongs to the universal ribosomal protein uS14 family. In terms of assembly, part of the 30S ribosomal subunit. Contacts proteins S3 and S10.

Binds 16S rRNA, required for the assembly of 30S particles and may also be responsible for determining the conformation of the 16S rRNA at the A site. The protein is Small ribosomal subunit protein uS14 of Burkholderia multivorans (strain ATCC 17616 / 249).